Here is a 2470-residue protein sequence, read N- to C-terminus: Serine/threonine-protein kinase mTor (2470 aa).

HEAT repeat units follow at residues 172–209 (QHILTFFEVIFNAIFDPKPAIRESAGEALRAALIVTAQ), 746–785 (SYMNPILKALVPKLHEPESNPGVILNVLRTIGDLAEVNGG), 791–829 (LWADDLLSILLEMLGDAGSPDKRGVALWTLGQLISATGR), 835–873 (HKYPVLIDILINFLKTEQRRSIRRETIRVLGLLGAMDPY), 962–999 (PYLAQVLPNLLDNVRTADNNLREFLFQQLAILVAFVKL), 1043–1080 (DYLAELIPQILRVLQHDNSKDRMVTRRLLQALQKFGST), 1083–1122 (YYLPLILPPIVKLFDSPYVPQQVSMVALETINNLACQLDF), and 1124–1160 (DFSSRIIHPLVRVLDAEPELRDQAMTTLRSLAKQLGK). An FAT domain is found at 1349–1903 (LLGTRAMACR…VYPLTVASKS (555 aa)). TPR repeat units lie at residues 1407 to 1440 (ANELNVQGRWYEKLHNWDEALEHYERNLKTDSSD) and 1718 to 1751 (MATWQNKLQDSIRPDAIQGALECFEKATSYDPNW). The stretch at 1854-1891 (NTWLQVIPQLIARIDTHRQLVGQLIHQLLMDIGKNHPQ) is one HEAT 9 repeat. One can recognise a PI3K/PI4K catalytic domain in the interval 2077–2389 (IKTNLQVITS…SLSNSVEDSL (313 aa)). Residues 2083-2089 (VITSKQR) are G-loop. Residues 2256 to 2264 (GLGDRHPSN) are catalytic loop. The activation loop stretch occupies residues 2276 to 2301 (HIDFGDCFEVAMTREKFPEKIPFRLT). Residues 2364–2389 (AGAGAPGGRGGSGMQDSLSNSVEDSL) form a disordered region. The span at 2367–2376 (GAPGGRGGSG) shows a compositional bias: gly residues. The span at 2377–2386 (MQDSLSNSVE) shows a compositional bias: polar residues. The region spanning 2438-2470 (KSVNEQSQVELLIQQATNNENLCQCYIGWCPFW) is the FATC domain.

Belongs to the PI3/PI4-kinase family. In terms of assembly, may be part of a minimal complex, TORC1, consisting of mTor, raptor and lst8. May be part of a minimal complex, TORC2, consisting of mTor, rictor and lst8. Self-associates; assembles into homomultimeric complexes. Component of a multiprotein complex.

It catalyses the reaction L-seryl-[protein] + ATP = O-phospho-L-seryl-[protein] + ADP + H(+). The enzyme catalyses L-threonyl-[protein] + ATP = O-phospho-L-threonyl-[protein] + ADP + H(+). Its function is as follows. Promotes cell and tissue growth, maintains tissue homeostatis and controls responses to environmental stress and aging. Regulates growth during animal development by coupling growth factor signaling to nutrient availability. Central regulators of autophagy. May be involved in atg1 phosphorylation. May also be involved, directly or indirectly, in the control of neuronal function. Phosphorylates S6K/p70S6K, in vitro. May regulate the activity of S6K. Overexpression inhibits growth and reduces cell size. Affects the timing of neuronal cell differentiation. Hyperactivation of the signaling leads to accelerated differentiation, whereas inhibition of the signaling retards differentiation. Thus, in addition to controlling growth of the cell in which it resides, it can also influence growth of distant cells and organs during development via a humoral mechanism. As part of the TORC1 complex regulates energy homeostasis and promotes certain aspects of larval growth by negatively regulating REPTOR. REPTOR functions downstream of TORC1 to regulate the expression of stress response genes in response to TORC1 inhibition resulting from nutrient deprivation. When TORC1 activity is high it phosphorylates REPTOR which inhibits its recruitment into the nucleus and antagonizes their function. This function is essential under normal feeding conditions to promote TORC1-dependent growth during larval development and, in adults and larvae to prevent the REPTOR-dependent expression of nutrient stress response genes. In short, during development, it primarily controls growth, whereas in the adult, where there is relatively little growth, it controls aging and other aspects of nutrient-related physiology. Rag GTPases act as activators of TORC1 in response to amino acid signals. This chain is Serine/threonine-protein kinase mTor, found in Drosophila melanogaster (Fruit fly).